Reading from the N-terminus, the 242-residue chain is MSGSHAPEGDCCLRQCRAQDKEHPRYLIPELCKQFYHLGWVTGTGGGISLKHGNEIYIAPSGVQKERIQPEDMFVCDINEKDISGPPPSKNLKKSQCTPLFMNAYTMREAGAVIHTHSKAAVMATLVFPGKEFKITHQEMIKGIKKCTSGGYYRYDDMLVVPIIENTPEEKDLKERMARAVNDYPDSCAVLVRRHGVYVWGETWEKAKTMCECYDYLFDVAVSMKQAGLDPAQLPAGENGIV.

Substrate is bound at residue Cys97. Positions 115 and 117 each coordinate Zn(2+). Glu139 serves as the catalytic Proton donor/acceptor. His195 provides a ligand contact to Zn(2+).

Belongs to the aldolase class II family. MtnB subfamily. As to quaternary structure, homotetramer. Interacts with APAF1. May interact with CASP1. Zn(2+) is required as a cofactor.

The protein localises to the cytoplasm. The enzyme catalyses 5-(methylsulfanyl)-D-ribulose 1-phosphate = 5-methylsulfanyl-2,3-dioxopentyl phosphate + H2O. It functions in the pathway amino-acid biosynthesis; L-methionine biosynthesis via salvage pathway; L-methionine from S-methyl-5-thio-alpha-D-ribose 1-phosphate: step 2/6. Its function is as follows. Catalyzes the dehydration of methylthioribulose-1-phosphate (MTRu-1-P) into 2,3-diketo-5-methylthiopentyl-1-phosphate (DK-MTP-1-P). Functions in the methionine salvage pathway, which plays a key role in cancer, apoptosis, microbial proliferation and inflammation. May inhibit the CASP1-related inflammatory response (pyroptosis), the CASP9-dependent apoptotic pathway and the cytochrome c-dependent and APAF1-mediated cell death. In Bos taurus (Bovine), this protein is Methylthioribulose-1-phosphate dehydratase.